Reading from the N-terminus, the 103-residue chain is MKQFENVNVELEGNSYFDGAVTSRTVNFPDGSRKTLGFMLPGEYEFGTAAAELMEITSGELDVKLPGSDEWLSIKGGESFNVPADSKFQVKVKRVTDYCCSYL.

Belongs to the nucleoside phosphorylase PpnP family.

The enzyme catalyses a purine D-ribonucleoside + phosphate = a purine nucleobase + alpha-D-ribose 1-phosphate. It catalyses the reaction adenosine + phosphate = alpha-D-ribose 1-phosphate + adenine. It carries out the reaction cytidine + phosphate = cytosine + alpha-D-ribose 1-phosphate. The catalysed reaction is guanosine + phosphate = alpha-D-ribose 1-phosphate + guanine. The enzyme catalyses inosine + phosphate = alpha-D-ribose 1-phosphate + hypoxanthine. It catalyses the reaction thymidine + phosphate = 2-deoxy-alpha-D-ribose 1-phosphate + thymine. It carries out the reaction uridine + phosphate = alpha-D-ribose 1-phosphate + uracil. The catalysed reaction is xanthosine + phosphate = alpha-D-ribose 1-phosphate + xanthine. Its function is as follows. Catalyzes the phosphorolysis of diverse nucleosides, yielding D-ribose 1-phosphate and the respective free bases. Can use uridine, adenosine, guanosine, cytidine, thymidine, inosine and xanthosine as substrates. Also catalyzes the reverse reactions. In Sulfurovum sp. (strain NBC37-1), this protein is Pyrimidine/purine nucleoside phosphorylase.